The following is a 346-amino-acid chain: NADH-ubiquinone oxidoreductase chain 2 (346 aa).

10 helical membrane-spanning segments follow: residues 25–45 (HWIL…PLIS), 52–72 (AIEA…LILF), 95–115 (CLIL…HFWF), 124–144 (LITA…LLLM), 149–169 (LNPA…GWMG), 178–196 (ILAF…IIIY), 200–219 (LTIL…FLSL), 247–267 (TLLS…WLII), 274–294 (EMTP…FFYL), and 326–346 (AILT…TTLV).

Belongs to the complex I subunit 2 family.

The protein localises to the mitochondrion inner membrane. It carries out the reaction a ubiquinone + NADH + 5 H(+)(in) = a ubiquinol + NAD(+) + 4 H(+)(out). In terms of biological role, core subunit of the mitochondrial membrane respiratory chain NADH dehydrogenase (Complex I) that is believed to belong to the minimal assembly required for catalysis. Complex I functions in the transfer of electrons from NADH to the respiratory chain. The immediate electron acceptor for the enzyme is believed to be ubiquinone. This Coturnix japonica (Japanese quail) protein is NADH-ubiquinone oxidoreductase chain 2 (MT-ND2).